A 154-amino-acid polypeptide reads, in one-letter code: uncharacterized protein (154 aa).

An HTH marR-type domain is found at 1-143 (MTESERALLT…LRKLAGSLTK (143 aa)). The H-T-H motif DNA-binding region spans 57–80 (LSKLAMSLDLKPASVTRMTDILYK).

This is an uncharacterized protein from Bacillus subtilis (strain 168).